A 473-amino-acid chain; its full sequence is Photosystem II CP43 reaction center protein (473 aa).

Positions M1–E14 are excised as a propeptide. Residue T15 is modified to N-acetylthreonine. Phosphothreonine is present on T15. Helical transmembrane passes span L69–A93, L134–N155, K178–T200, K255–S275, and W291–A312. E367 is a [CaMn4O5] cluster binding site. A helical transmembrane segment spans residues R447–P471.

The protein belongs to the PsbB/PsbC family. PsbC subfamily. In terms of assembly, PSII is composed of 1 copy each of membrane proteins PsbA, PsbB, PsbC, PsbD, PsbE, PsbF, PsbH, PsbI, PsbJ, PsbK, PsbL, PsbM, PsbT, PsbX, PsbY, PsbZ, Psb30/Ycf12, at least 3 peripheral proteins of the oxygen-evolving complex and a large number of cofactors. It forms dimeric complexes. Requires Binds multiple chlorophylls and provides some of the ligands for the Ca-4Mn-5O cluster of the oxygen-evolving complex. It may also provide a ligand for a Cl- that is required for oxygen evolution. PSII binds additional chlorophylls, carotenoids and specific lipids. as cofactor.

It is found in the plastid. Its subcellular location is the chloroplast thylakoid membrane. One of the components of the core complex of photosystem II (PSII). It binds chlorophyll and helps catalyze the primary light-induced photochemical processes of PSII. PSII is a light-driven water:plastoquinone oxidoreductase, using light energy to abstract electrons from H(2)O, generating O(2) and a proton gradient subsequently used for ATP formation. The chain is Photosystem II CP43 reaction center protein from Drimys granadensis.